The chain runs to 309 residues: Ribonuclease Z (309 aa).

Residues His-63, His-65, Asp-67, His-68, His-141, Asp-212, and His-270 each coordinate Zn(2+). Asp-67 (proton acceptor) is an active-site residue.

The protein belongs to the RNase Z family. In terms of assembly, homodimer. Zn(2+) is required as a cofactor.

It carries out the reaction Endonucleolytic cleavage of RNA, removing extra 3' nucleotides from tRNA precursor, generating 3' termini of tRNAs. A 3'-hydroxy group is left at the tRNA terminus and a 5'-phosphoryl group is left at the trailer molecule.. Its function is as follows. Zinc phosphodiesterase, which displays some tRNA 3'-processing endonuclease activity. Probably involved in tRNA maturation, by removing a 3'-trailer from precursor tRNA. The sequence is that of Ribonuclease Z from Lactobacillus johnsonii (strain CNCM I-12250 / La1 / NCC 533).